We begin with the raw amino-acid sequence, 337 residues long: Eukaryotic translation initiation factor 3 subunit H (337 aa).

The MPN domain maps to 21–153 (VQCDGLAVMK…LKAYRLTPQA (133 aa)).

The protein belongs to the eIF-3 subunit H family. Component of the eukaryotic translation initiation factor 3 (eIF-3) complex. The eIF-3 complex interacts with pix. Interacts with mxt.

It is found in the cytoplasm. Functionally, component of the eukaryotic translation initiation factor 3 (eIF-3) complex, which is involved in protein synthesis of a specialized repertoire of mRNAs and, together with other initiation factors, stimulates binding of mRNA and methionyl-tRNAi to the 40S ribosome. The eIF-3 complex specifically targets and initiates translation of a subset of mRNAs involved in cell proliferation. The chain is Eukaryotic translation initiation factor 3 subunit H from Drosophila willistoni (Fruit fly).